The primary structure comprises 546 residues: CTP synthase (546 aa).

Residues 1-266 (MTTRYIFVTG…DDLVVKRFGL (266 aa)) form an amidoligase domain region. Ser14 contributes to the CTP binding site. UTP is bound at residue Ser14. Residues 15 to 20 (SLGKGI) and Asp72 each bind ATP. 2 residues coordinate Mg(2+): Asp72 and Glu140. Residues 147–149 (DIE), 187–192 (KTKPTQ), and Lys223 contribute to the CTP site. UTP is bound by residues 187–192 (KTKPTQ) and Lys223. Residue 239-241 (KDV) participates in ATP binding. The Glutamine amidotransferase type-1 domain occupies 291–542 (VIGMVGKYIE…VAAASAHQKR (252 aa)). Gly352 contacts L-glutamine. The Nucleophile; for glutamine hydrolysis role is filled by Cys379. Residues 380-383 (LGMQ), Glu403, and Arg470 contribute to the L-glutamine site. Catalysis depends on residues His515 and Glu517.

Belongs to the CTP synthase family. In terms of assembly, homotetramer.

The enzyme catalyses UTP + L-glutamine + ATP + H2O = CTP + L-glutamate + ADP + phosphate + 2 H(+). It catalyses the reaction L-glutamine + H2O = L-glutamate + NH4(+). The catalysed reaction is UTP + NH4(+) + ATP = CTP + ADP + phosphate + 2 H(+). Its pathway is pyrimidine metabolism; CTP biosynthesis via de novo pathway; CTP from UDP: step 2/2. Its activity is regulated as follows. Allosterically activated by GTP, when glutamine is the substrate; GTP has no effect on the reaction when ammonia is the substrate. The allosteric effector GTP functions by stabilizing the protein conformation that binds the tetrahedral intermediate(s) formed during glutamine hydrolysis. Inhibited by the product CTP, via allosteric rather than competitive inhibition. In terms of biological role, catalyzes the ATP-dependent amination of UTP to CTP with either L-glutamine or ammonia as the source of nitrogen. Regulates intracellular CTP levels through interactions with the four ribonucleotide triphosphates. This Shewanella sp. (strain ANA-3) protein is CTP synthase.